The following is a 221-amino-acid chain: 2-phospho-L-lactate guanylyltransferase (221 aa).

This sequence belongs to the CofC family. As to quaternary structure, homodimer.

It carries out the reaction (2S)-2-phospholactate + GTP + H(+) = (2S)-lactyl-2-diphospho-5'-guanosine + diphosphate. It participates in cofactor biosynthesis; coenzyme F420 biosynthesis. Guanylyltransferase that catalyzes the activation of (2S)-2-phospholactate (2-PL) as (2S)-lactyl-2-diphospho-5'-guanosine, via the condensation of 2-PL with GTP. It is involved in the biosynthesis of coenzyme F420, a hydride carrier cofactor. The polypeptide is 2-phospho-L-lactate guanylyltransferase (Methanothrix thermoacetophila (strain DSM 6194 / JCM 14653 / NBRC 101360 / PT) (Methanosaeta thermophila)).